Reading from the N-terminus, the 155-residue chain is 3-dehydroquinate dehydratase 1 (155 aa).

The active-site Proton acceptor is Tyr-28. Substrate contacts are provided by Asn-80, His-86, and Asp-93. His-106 acts as the Proton donor in catalysis. Residues Val-107 to Thr-108 and Arg-117 each bind substrate.

The protein belongs to the type-II 3-dehydroquinase family. Homododecamer.

It carries out the reaction 3-dehydroquinate = 3-dehydroshikimate + H2O. Its pathway is metabolic intermediate biosynthesis; chorismate biosynthesis; chorismate from D-erythrose 4-phosphate and phosphoenolpyruvate: step 3/7. Its function is as follows. Catalyzes a trans-dehydration via an enolate intermediate. The protein is 3-dehydroquinate dehydratase 1 (aroQ1) of Bradyrhizobium diazoefficiens (strain JCM 10833 / BCRC 13528 / IAM 13628 / NBRC 14792 / USDA 110).